The primary structure comprises 39 residues: Bacteriocin SRCAM 602 (39 aa).

It belongs to the bacteriocin class IIA/YGNGV family.

It is found in the secreted. Bacteriocin with antibacterial activity against C.jejuni. In Paenibacillus polymyxa (Bacillus polymyxa), this protein is Bacteriocin SRCAM 602.